The following is a 158-amino-acid chain: C-type lectin lectoxin-Enh5 (158 aa).

A signal peptide spans 1 to 23; that stretch reads MGQFTVVSLGLLAVFLSLSGAKG. Disulfide bonds link Cys26–Cys37, Cys54–Cys154, and Cys129–Cys146. A C-type lectin domain is found at 33-155; sequence RNGVCNKLFP…CASLHPFICQ (123 aa). The Mannose-binding motif lies at 119–121; that stretch reads EPN. The Ca(2+) site is built by Glu127, Asn142, and Asp143.

The protein belongs to the true venom lectin family. As to expression, expressed by the venom gland.

Its subcellular location is the secreted. Mannose-binding lectin which recognizes specific carbohydrate structures and agglutinates a variety of animal cells by binding to cell-surface glycoproteins and glycolipids. May be a calcium-dependent lectin. The sequence is that of C-type lectin lectoxin-Enh5 from Pseudoferania polylepis (Macleay's water snake).